The sequence spans 545 residues: Phenylalanine--tRNA ligase beta subunit (545 aa).

The B5 domain maps to 268 to 343; it reads FLHKIQNVRE…MSIGYNNLEP (76 aa). Positions 321, 327, 330, and 331 each coordinate Mg(2+).

Belongs to the phenylalanyl-tRNA synthetase beta subunit family. Type 2 subfamily. In terms of assembly, tetramer of two alpha and two beta subunits. Mg(2+) serves as cofactor.

Its subcellular location is the cytoplasm. The enzyme catalyses tRNA(Phe) + L-phenylalanine + ATP = L-phenylalanyl-tRNA(Phe) + AMP + diphosphate + H(+). This chain is Phenylalanine--tRNA ligase beta subunit, found in Saccharolobus islandicus (strain M.14.25 / Kamchatka #1) (Sulfolobus islandicus).